The sequence spans 561 residues: Arginine--tRNA ligase (561 aa).

Residues 128–138 (ANPTGPLHVGH) carry the 'HIGH' region motif.

The protein belongs to the class-I aminoacyl-tRNA synthetase family. As to quaternary structure, monomer.

Its subcellular location is the cytoplasm. The enzyme catalyses tRNA(Arg) + L-arginine + ATP = L-arginyl-tRNA(Arg) + AMP + diphosphate. The polypeptide is Arginine--tRNA ligase (Chromohalobacter salexigens (strain ATCC BAA-138 / DSM 3043 / CIP 106854 / NCIMB 13768 / 1H11)).